The chain runs to 985 residues: Translation initiation factor IF-2 (985 aa).

3 stretches are compositionally biased toward basic and acidic residues: residues 49 to 58 (QYGKKQEKSS), 65 to 89 (IQREHGRGQGMEDKKEKDQLFRPDN), and 99 to 113 (VPNRPPDRRYEDKAK). A disordered region spans residues 49 to 401 (QYGKKQEKSS…QQSAPPPILD (353 aa)). Positions 125–136 (SKTTTNSENEQT) are enriched in polar residues. Positions 137 to 162 (APRQGSAQQSGQGRPQANRPQGSQGR) are enriched in low complexity. Gly residues-rich tracts occupy residues 180 to 246 (PQGG…GQGR) and 288 to 324 (PQGGQGRPYGDRPQGGQGRHYGDRPQGGQGRPQGAGR). Over residues 349–377 (KAPDKTKGDRRKNYEKDGKWADGQIEKNK) the composition is skewed to basic and acidic residues. Residues 378–391 (LFKGRNNKNKKRQH) show a composition bias toward basic residues. One can recognise a tr-type G domain in the interval 485–654 (LRPPVVTIMG…LLVAEVHELK (170 aa)). Positions 494–501 (GHVDHGKT) are G1. 494–501 (GHVDHGKT) serves as a coordination point for GTP. The tract at residues 519–523 (GITQH) is G2. The tract at residues 540 to 543 (DTPG) is G3. GTP is bound by residues 540-544 (DTPGH) and 594-597 (NKMD). The G4 stretch occupies residues 594–597 (NKMD). The segment at 630–632 (SAK) is G5.

The protein belongs to the TRAFAC class translation factor GTPase superfamily. Classic translation factor GTPase family. IF-2 subfamily.

It localises to the cytoplasm. In terms of biological role, one of the essential components for the initiation of protein synthesis. Protects formylmethionyl-tRNA from spontaneous hydrolysis and promotes its binding to the 30S ribosomal subunits. Also involved in the hydrolysis of GTP during the formation of the 70S ribosomal complex. The chain is Translation initiation factor IF-2 from Desulforamulus reducens (strain ATCC BAA-1160 / DSM 100696 / MI-1) (Desulfotomaculum reducens).